The following is a 75-amino-acid chain: Small ribosomal subunit protein bS21A (75 aa).

It belongs to the bacterial ribosomal protein bS21 family.

This is Small ribosomal subunit protein bS21A (rpsU1) from Agrobacterium fabrum (strain C58 / ATCC 33970) (Agrobacterium tumefaciens (strain C58)).